A 496-amino-acid polypeptide reads, in one-letter code: L-arabinose isomerase (496 aa).

Glutamate 306, glutamate 331, histidine 348, and histidine 447 together coordinate Mn(2+).

This sequence belongs to the arabinose isomerase family. Homotetramer. Mn(2+) is required as a cofactor.

It carries out the reaction beta-L-arabinopyranose = L-ribulose. Its pathway is carbohydrate degradation; L-arabinose degradation via L-ribulose; D-xylulose 5-phosphate from L-arabinose (bacterial route): step 1/3. With respect to regulation, inhibited by copper. Catalyzes the conversion of L-arabinose to L-ribulose. In vitro, converts D-galactose into D-tagatose. The polypeptide is L-arabinose isomerase (araA) (Geobacillus stearothermophilus (Bacillus stearothermophilus)).